Consider the following 104-residue polypeptide: Large ribosomal subunit protein uL24 (104 aa).

Belongs to the universal ribosomal protein uL24 family. As to quaternary structure, part of the 50S ribosomal subunit.

Its function is as follows. One of two assembly initiator proteins, it binds directly to the 5'-end of the 23S rRNA, where it nucleates assembly of the 50S subunit. Functionally, one of the proteins that surrounds the polypeptide exit tunnel on the outside of the subunit. The chain is Large ribosomal subunit protein uL24 from Methylorubrum extorquens (strain PA1) (Methylobacterium extorquens).